The sequence spans 350 residues: Transmembrane protein 185A (350 aa).

The next 7 helical transmembrane spans lie at 16 to 36 (LIYA…DGII), 41 to 61 (WAVF…ASVG), 81 to 101 (FKAM…EVLV), 111 to 131 (FWLL…AACV), 177 to 197 (ILMS…VLFL), 211 to 231 (ITMA…EILL), and 240 to 260 (AFSC…LMAT). The mediates interaction with MAP1B stretch occupies residues 298 to 350 (DLHHEDSEETEETPVPEPPKIAPMFRKKARVVITQSPGKYVLPPPKLNIEMPD).

Belongs to the TMEM185 family. In terms of assembly, interacts with MAP1B. As to expression, broadly expressed in brain where it is specifically expressed by neurons (at protein level). Also detected in some cells of arterioles, intestine, lung and testis (at protein level).

It is found in the cell projection. Its subcellular location is the dendrite. It localises to the membrane. This chain is Transmembrane protein 185A (Tmem185a), found in Mus musculus (Mouse).